An 86-amino-acid chain; its full sequence is Centromere protein W (86 aa).

This sequence belongs to the CENP-W/WIP1 family. As to quaternary structure, heterodimer with CENPT; this dimer coassembles with CENPS-CENPX heterodimers at centromeres to form the tetrameric CENP-T-W-S-X complex, which is a subcomplex of the large constitutive centromere-associated network (CCAN, also known as the interphase centromere complex or ICEN). Interacts with NPM1.

Its subcellular location is the nucleus. It localises to the chromosome. It is found in the centromere. The protein resides in the kinetochore. The protein localises to the nucleus matrix. Its subcellular location is the nucleolus. In terms of biological role, component of the CENPA-NAC (nucleosome-associated) complex, a complex that plays a central role in assembly of kinetochore proteins, mitotic progression and chromosome segregation. The CENPA-NAC complex recruits the CENPA-CAD (nucleosome distal) complex and may be involved in incorporation of newly synthesized CENPA into centromeres. Part of a nucleosome-associated complex that binds specifically to histone H3-containing nucleosomes at the centromere, as opposed to nucleosomes containing CENPA. Component of the heterotetrameric CENP-T-W-S-X complex that binds and supercoils DNA, and plays an important role in kinetochore assembly. CENPW has a fundamental role in kinetochore assembly and function. It is one of the inner kinetochore proteins, with most further proteins binding downstream. Required for normal chromosome organization and normal progress through mitosis. The sequence is that of Centromere protein W (Cenpw) from Mus musculus (Mouse).